Reading from the N-terminus, the 150-residue chain is Classical arabinogalactan protein 6 (150 aa).

The signal sequence occupies residues 1-20; the sequence is MARQFVVLVLLTLTIATAFA. Low complexity-rich tracts occupy residues 19–75 and 85–98; these read FAAD…SPAA and SASS…APTV. The disordered stretch occupies residues 19 to 131; that stretch reads FAADAPSASP…ESPKSGAVTT (113 aa). Residue serine 126 is the site of GPI-anchor amidated serine attachment. The propeptide at 127 to 150 is removed in mature form; the sequence is GAVTTAKFSVVGTVATVGFFFFSF.

It belongs to the classical AGP family. O-glycosylated on the hydroxyproline residues. As to expression, expressed in the anthers.

Its subcellular location is the cell membrane. Functionally, proteoglycan that seems to be implicated in diverse developmental roles such as differentiation, cell-cell recognition, embryogenesis and programmed cell death. Plays an important role during the formation of the nexine layer of the pollen wall. The polypeptide is Classical arabinogalactan protein 6 (AGP6) (Arabidopsis thaliana (Mouse-ear cress)).